The chain runs to 209 residues: Urease accessory protein UreG (209 aa).

16–23 (GPVGSGKT) is a GTP binding site.

This sequence belongs to the SIMIBI class G3E GTPase family. UreG subfamily. Homodimer. UreD, UreF and UreG form a complex that acts as a GTP-hydrolysis-dependent molecular chaperone, activating the urease apoprotein by helping to assemble the nickel containing metallocenter of UreC. The UreE protein probably delivers the nickel.

Its subcellular location is the cytoplasm. In terms of biological role, facilitates the functional incorporation of the urease nickel metallocenter. This process requires GTP hydrolysis, probably effectuated by UreG. In Blochmanniella floridana, this protein is Urease accessory protein UreG.